The primary structure comprises 427 residues: Histidinol dehydrogenase (427 aa).

NAD(+) is bound by residues Y127, Q187, and N210. The substrate site is built by S233, Q255, and H258. Positions 255 and 258 each coordinate Zn(2+). Catalysis depends on proton acceptor residues E323 and H324. Substrate is bound by residues H324, D357, E411, and H416. Residue D357 participates in Zn(2+) binding. Residue H416 coordinates Zn(2+).

Belongs to the histidinol dehydrogenase family. It depends on Zn(2+) as a cofactor.

The catalysed reaction is L-histidinol + 2 NAD(+) + H2O = L-histidine + 2 NADH + 3 H(+). It functions in the pathway amino-acid biosynthesis; L-histidine biosynthesis; L-histidine from 5-phospho-alpha-D-ribose 1-diphosphate: step 9/9. Functionally, catalyzes the sequential NAD-dependent oxidations of L-histidinol to L-histidinaldehyde and then to L-histidine. This chain is Histidinol dehydrogenase, found in Streptococcus mutans serotype c (strain ATCC 700610 / UA159).